Here is a 257-residue protein sequence, read N- to C-terminus: Exosome complex component mtr3 (257 aa).

Belongs to the RNase PH family. Component of the RNA exosome complex. Specifically part of the catalytically inactive RNA exosome core complex (Exo-9) may associate with the catalytic subunits rrp6 and dis3 in cytoplasmic- and nuclear-specific RNA exosome complex forms. Exo-9 is formed by a hexameric base ring of RNase PH domain-containing subunits and a cap ring consisting of csl4, rrp4 and rrp40.

The protein localises to the cytoplasm. It is found in the nucleus. It localises to the nucleolus. Non-catalytic component of the RNA exosome complex which has 3'-&gt;5' exoribonuclease activity and participates in a multitude of cellular RNA processing and degradation events. In the nucleus, the RNA exosome complex is involved in proper maturation of stable RNA species such as rRNA, snRNA and snoRNA, in the elimination of RNA processing by-products and non-coding 'pervasive' transcripts, such as antisense RNA species and cryptic unstable transcripts (CUTs), and of mRNAs with processing defects, thereby limiting or excluding their export to the cytoplasm. In the cytoplasm, the RNA exosome complex is involved in general mRNA turnover and in RNA surveillance pathways, preventing translation of aberrant mRNAs. The catalytic inactive RNA exosome core complex of 9 subunits (Exo-9) is proposed to play a pivotal role in the binding and presentation of RNA for ribonucleolysis, and to serve as a scaffold for the association with catalytic subunits and accessory proteins or complexes. ski6 is part of the hexameric ring of RNase PH domain-containing subunits proposed to form a central channel which threads RNA substrates for degradation. This chain is Exosome complex component mtr3 (mtr3), found in Schizosaccharomyces pombe (strain 972 / ATCC 24843) (Fission yeast).